Here is a 101-residue protein sequence, read N- to C-terminus: Putative pterin-4-alpha-carbinolamine dehydratase (101 aa).

It belongs to the pterin-4-alpha-carbinolamine dehydratase family.

The catalysed reaction is (4aS,6R)-4a-hydroxy-L-erythro-5,6,7,8-tetrahydrobiopterin = (6R)-L-erythro-6,7-dihydrobiopterin + H2O. In Nitrobacter winogradskyi (strain ATCC 25391 / DSM 10237 / CIP 104748 / NCIMB 11846 / Nb-255), this protein is Putative pterin-4-alpha-carbinolamine dehydratase.